A 165-amino-acid chain; its full sequence is uncharacterized protein (165 aa).

The tract at residues 28-97 (EASAPSGNPP…QLSQSLEVPT (70 aa)) is disordered. Residues 34–47 (GNPPPPPPPPPPPI) show a composition bias toward pro residues. 2 stretches are compositionally biased toward polar residues: residues 54–66 (KSLN…QLDN) and 73–94 (AQHT…QSLE).

This is an uncharacterized protein from Rickettsia prowazekii (strain Madrid E).